Here is a 275-residue protein sequence, read N- to C-terminus: Translation initiation factor 2 subunit alpha (275 aa).

The S1 motif domain maps to 12–83 (GEFVVATVKR…RKGHIDLSLR (72 aa)).

This sequence belongs to the eIF-2-alpha family. As to quaternary structure, heterotrimer composed of an alpha, a beta and a gamma chain.

Its function is as follows. eIF-2 functions in the early steps of protein synthesis by forming a ternary complex with GTP and initiator tRNA. In Pyrococcus abyssi (strain GE5 / Orsay), this protein is Translation initiation factor 2 subunit alpha (eif2a).